The sequence spans 505 residues: Pleckstrin homology domain-containing family D member 1 (505 aa).

Positions 28-136 (KVQLYGVLWK…WLEMLQESGK (109 aa)) constitute a PH domain. The stretch at 146-391 (EAMIKSLEAQ…KVRNKEKEER (246 aa)) forms a coiled coil. Positions 264–284 (DKNQPQPLTNQSEQPPASDGL) are disordered. The span at 267 to 278 (QPQPLTNQSEQP) shows a compositional bias: polar residues. An Omega-N-methylarginine modification is found at Arg-502.

It belongs to the PLEKHD1 family.

The chain is Pleckstrin homology domain-containing family D member 1 (Plekhd1) from Mus musculus (Mouse).